The following is a 496-amino-acid chain: Inosine-5'-monophosphate dehydrogenase (496 aa).

CBS domains lie at 96 to 152 (VIKD…TKKV) and 156 to 212 (MTKD…PQAA). NAD(+)-binding positions include D247 and 299 to 301 (GIG). 2 residues coordinate K(+): G301 and G303. S304 serves as a coordination point for IMP. Position 306 (C306) interacts with K(+). The active-site Thioimidate intermediate is C306. Residues 339-341 (DGG), 362-363 (GS), and 386-390 (YRGMG) contribute to the IMP site. R405 serves as the catalytic Proton acceptor. E423 is an IMP binding site. K(+)-binding residues include E477, S478, and H479.

Belongs to the IMPDH/GMPR family. As to quaternary structure, homotetramer. K(+) serves as cofactor.

It carries out the reaction IMP + NAD(+) + H2O = XMP + NADH + H(+). It participates in purine metabolism; XMP biosynthesis via de novo pathway; XMP from IMP: step 1/1. Mycophenolic acid (MPA) is a non-competitive inhibitor that prevents formation of the closed enzyme conformation by binding to the same site as the amobile flap. In contrast, mizoribine monophosphate (MZP) is a competitive inhibitor that induces the closed conformation. MPA is a potent inhibitor of mammalian IMPDHs but a poor inhibitor of the bacterial enzymes. MZP is a more potent inhibitor of bacterial IMPDH. In terms of biological role, catalyzes the conversion of inosine 5'-phosphate (IMP) to xanthosine 5'-phosphate (XMP), the first committed and rate-limiting step in the de novo synthesis of guanine nucleotides, and therefore plays an important role in the regulation of cell growth. This Methanocaldococcus jannaschii (strain ATCC 43067 / DSM 2661 / JAL-1 / JCM 10045 / NBRC 100440) (Methanococcus jannaschii) protein is Inosine-5'-monophosphate dehydrogenase.